A 184-amino-acid chain; its full sequence is NADH-quinone oxidoreductase subunit B 1 (184 aa).

4 residues coordinate [4Fe-4S] cluster: Cys37, Cys38, Cys103, and Cys132.

This sequence belongs to the complex I 20 kDa subunit family. In terms of assembly, NDH-1 is composed of 14 different subunits. Subunits NuoB, C, D, E, F, and G constitute the peripheral sector of the complex. The cofactor is [4Fe-4S] cluster.

It is found in the cell membrane. The catalysed reaction is a quinone + NADH + 5 H(+)(in) = a quinol + NAD(+) + 4 H(+)(out). Its function is as follows. NDH-1 shuttles electrons from NADH, via FMN and iron-sulfur (Fe-S) centers, to quinones in the respiratory chain. The immediate electron acceptor for the enzyme in this species is believed to be a menaquinone. Couples the redox reaction to proton translocation (for every two electrons transferred, four hydrogen ions are translocated across the cytoplasmic membrane), and thus conserves the redox energy in a proton gradient. The chain is NADH-quinone oxidoreductase subunit B 1 from Streptomyces coelicolor (strain ATCC BAA-471 / A3(2) / M145).